The chain runs to 161 residues: Nucleotide-binding protein BTH_I0730 (161 aa).

Belongs to the YajQ family.

Functionally, nucleotide-binding protein. This chain is Nucleotide-binding protein BTH_I0730, found in Burkholderia thailandensis (strain ATCC 700388 / DSM 13276 / CCUG 48851 / CIP 106301 / E264).